The sequence spans 202 residues: Virulence protein F (202 aa).

The segment covering 1–15 (MRNSSLRDASGSNDA) has biased composition (polar residues). Positions 1–21 (MRNSSLRDASGSNDAQVPHKT) are disordered. The 23-residue stretch at 20 to 42 (KTELLNLPDHVLTEVAKRLATNN) folds into the F-box domain.

Component of SCF(virF) E3 ubiquitin ligase complexes. Interacts with host VIP1 and SKP1A. Interacts with Arabidopsis thaliana ENAP1/VFP3 and VFP5 in the host cell nucleus.

The protein localises to the host nucleus. Functionally, in the host plant, component of SCF(virF) E3 ubiquitin ligase complexes, which mediate the ubiquitination and subsequent proteasomal degradation of target proteins such as the host VIP1, after its implication in T-DNA translocation to the host nucleus. Required for the formation of tumors of a wild-type size on certain plant species only. This is Virulence protein F from Agrobacterium tumefaciens (strain 15955).